The following is a 379-amino-acid chain: Putative nucleosome assembly protein C2D10.11C (379 aa).

Basic and acidic residues predominate over residues 1–10; it reads MSKGPGDFKK. 2 disordered regions span residues 1 to 30 and 345 to 379; these read MSKG…DVHL and SDFN…EISD. Positions 16-28 are enriched in polar residues; sequence AAQTPQNTPSSDV.

It belongs to the nucleosome assembly protein (NAP) family.

Its subcellular location is the nucleus. This chain is Putative nucleosome assembly protein C2D10.11C, found in Schizosaccharomyces pombe (strain 972 / ATCC 24843) (Fission yeast).